The following is a 318-amino-acid chain: Homeobox-leucine zipper protein ATHB-4 (318 aa).

Disordered regions lie at residues 1–23 (MGER…KEPS) and 128–165 (ARGG…RKKL). The segment covering 8-17 (LGLSLSLGNS) has biased composition (low complexity). The segment covering 128 to 140 (ARGGDENEAERAS) has biased composition (basic and acidic residues). Residues 160–219 (GSRKKLRLSKDQALVLEETFKEHSTLNPKQKLALAKQLNLRARQVEVWFQNRRARTKLKQ) constitute a DNA-binding region (homeobox). Residues 227 to 248 (LKRCCDNLTEENRRLQKEVSEL) form a leucine-zipper region.

Belongs to the HD-ZIP homeobox family. Class II subfamily.

It is found in the nucleus. Its function is as follows. Probable transcription factor. This Arabidopsis thaliana (Mouse-ear cress) protein is Homeobox-leucine zipper protein ATHB-4 (ATHB-4).